The following is a 207-amino-acid chain: M-zodatoxin-Lt4a (207 aa).

An N-terminal signal peptide occupies residues 1–22 (MKFSIIALALAVAFVCVAESRS). A propeptide spanning residues 23-43 (EEEGYDVSEEIQAEELEEAER) is cleaved from the precursor. Positions 40-43 (EAER) match the Processing quadruplet motif 1 motif. Glutamine 61 carries the post-translational modification Glutamine amide. The Inverted processing quadruplet motif 1 motif lies at 63-66 (REDS). Positions 63-71 (REDSEEAGR) are excised as a propeptide. Residues 68-71 (EAGR) carry the Processing quadruplet motif 2 motif. Glutamine 89 carries the glutamine amide modification. Positions 91–94 (REDS) match the Inverted processing quadruplet motif 2 motif. A propeptide spanning residues 91 to 99 (REDSEEAGR) is cleaved from the precursor. Residues 96-99 (EAGR) carry the Processing quadruplet motif 3 motif. Glutamine 117 is subject to Glutamine amide. The Inverted processing quadruplet motif 3 signature appears at 119–122 (REDS). A propeptide spanning residues 119 to 127 (REDSEEAGR) is cleaved from the precursor. The Processing quadruplet motif 4 signature appears at 124-127 (EAGR). Glutamine 145 bears the Glutamine amide mark. An Inverted processing quadruplet motif 4 motif is present at residues 147–150 (REDS). Residues 147-155 (REDSEEAGR) constitute a propeptide that is removed on maturation. Residues 152–155 (EAGR) carry the Processing quadruplet motif 5 motif. Glutamine 173 bears the Glutamine amide mark. The short motif at 175–178 (REDT) is the Inverted processing quadruplet motif 5 element. Positions 175–182 (REDTEEAR) are excised as a propeptide. The Processing quadruplet motif 6 signature appears at 179 to 182 (EEAR). Phenylalanine 206 is modified (phenylalanine amide).

The protein belongs to the cationic peptide 03 (latarcin) family. 04 subfamily. Cleavage of the propeptide depends on the processing quadruplet motif (PQM) (XXXR, with at least one of X being E) and the inverted PQM (RXXX, with at least one of X being E). Expressed by the venom gland.

The protein localises to the secreted. Functionally, M-zodatoxin-Lt4a: Has antimicrobial activity against Gram-positive bacteria (A.globiformis VKM Ac-1112 (MIC=0.3 uM), and B.subtilis VKM B-501 (MIC=1.1 uM)), Gram-negative bacteria (E.coli DH5-alpha (MIC=4.5 uM), E.coli MH1 (MIC=3.2 uM), and P.aeruginosa PAO1 (MIC&gt;35 uM)), and yeasts (P.pastoris GS115 (MIC=36 uM), and S.cerevisiae Y190 (MIC=18 uM)). Does not have hemolytic activity against rabbit erythrocytes. Causes paralysis, but is not lethal when injected into insect (M.domestica) larvae. In terms of biological role, shows no antimicrobial activity against Gram-positive bacterium B.subtilis B-501 or Gram-negative bacterium E.coli DH5-alpha at concentrations up to 20 uM. Its function is as follows. Shows no antimicrobial activity against Gram-positive bacterium B.subtilis B-501 or Gram-negative bacterium E.coli DH5-alpha at concentrations up to 20 uM. Shows no toxicity towards insect (S.carnaria) larvae. The protein is M-zodatoxin-Lt4a of Lachesana tarabaevi (Spider).